The chain runs to 127 residues: Small ribosomal subunit protein uS11 (127 aa).

Belongs to the universal ribosomal protein uS11 family. In terms of assembly, part of the 30S ribosomal subunit. Interacts with proteins S7 and S18. Binds to IF-3.

In terms of biological role, located on the platform of the 30S subunit, it bridges several disparate RNA helices of the 16S rRNA. Forms part of the Shine-Dalgarno cleft in the 70S ribosome. This is Small ribosomal subunit protein uS11 from Prosthecochloris aestuarii (strain DSM 271 / SK 413).